A 93-amino-acid chain; its full sequence is Protein BOLA2 (93 aa).

C29 is subject to S-glutathionyl cysteine; transient; alternate. The segment at K72–A93 is disordered.

This sequence belongs to the bolA/yrbA family. As to quaternary structure, homodimer. Interacts in vitro with GRXS14, GRXS15, GRXS16 and GRXS17, but not with GRXC5. Interacts in vivo only with GRXS17. Can be either glutathionylated or forming covalent homodimers, depending on the oxidation state.

It localises to the cytoplasm. The protein resides in the nucleus. Its function is as follows. May act either alone or in interaction with glutaredoxin as a redox-regulated transcriptional regulator, or as a factor regulating Fe-S cluster biogenesis. The GRXS17-BOLA2 heterodimer binds a labile, oxygen sensitive iron-sulfur cluster. The sequence is that of Protein BOLA2 from Arabidopsis thaliana (Mouse-ear cress).